The following is a 295-amino-acid chain: G1/S-specific cyclin-D1 (295 aa).

The region spanning 28–152 (LRAMLKTEET…LLVNKLKWNL (125 aa)) is the Cyclin N-terminal domain. Residue Lys-269 forms a Glycyl lysine isopeptide (Lys-Gly) (interchain with G-Cter in ubiquitin) linkage. A disordered region spans residues 269 to 295 (KATEEEGEVEEEAGLACTPTDVRDVDI). The residue at position 286 (Thr-286) is a Phosphothreonine.

This sequence belongs to the cyclin family. Cyclin D subfamily. As to quaternary structure, interacts with either CDK4 or CDK6 protein kinase to form a serine/threonine kinase holoenzyme complex. The cyclin subunit imparts substrate specificity to the complex. Component of the ternary complex CCND1/CDK4/CDKN1B required for nuclear translocation and modulation of CDK4-mediated kinase activity. Interacts directly with CDKN1B. Can form similar complexes with either CDKN1A or CDKN2A. Interacts with UHRF2; the interaction ubiquitinates CCND1 and appears to occur independently of phosphorylation. Interacts with USP2. Interacts (via cyclin N-terminal domain) with INSM1 (via N-terminal region); the interaction competes with the binding of CCND1 to CDK4 during cell cycle progression and inhibits CDK4 activity. Interacts with CDK4; the interaction is prevented with the binding of CCND1 to INSM1 during cell cycle progression. In terms of processing, phosphorylation at Thr-286 by MAP kinases is required for ubiquitination and degradation by the DCX(AMBRA1) complex. It also plays an essential role for recognition by the FBXO31 component of SCF (SKP1-cullin-F-box) protein ligase complex following DNA damage. Post-translationally, ubiquitinated at Lys-269 by the DCX(AMBRA1) complex during the transition from G1 to S cell phase, leading to its degradation: ubiquitination is dependent on Thr-286 phosphorylation. The DCX(AMBRA1) complex represents the major regulator of CCND1 stability during the G1/S transition. Also ubiquitinated by the SCF(FBXO4) and Cul7-RING(FBXW8) ubiquitin-protein ligase complexes. Following DNA damage it is ubiquitinated by the SCF(FBXO31) protein ligase complex. SCF(FBXO31) ubiquitination is dependent on Thr-286 phosphorylation. Ubiquitinated also by UHRF2 apparently in a phosphorylation-independent manner. Ubiquitination leads to its degradation and G1 arrest. Deubiquitinated by USP2; leading to its stabilization.

It localises to the nucleus. The protein localises to the cytoplasm. The protein resides in the nucleus membrane. Its function is as follows. Regulatory component of the cyclin D1-CDK4 (DC) complex that phosphorylates and inhibits members of the retinoblastoma (RB) protein family including RB1 and regulates the cell-cycle during G(1)/S transition. Phosphorylation of RB1 allows dissociation of the transcription factor E2F from the RB/E2F complex and the subsequent transcription of E2F target genes which are responsible for the progression through the G(1) phase. Hypophosphorylates RB1 in early G(1) phase. Cyclin D-CDK4 complexes are major integrators of various mitogenenic and antimitogenic signals. Also a substrate for SMAD3, phosphorylating SMAD3 in a cell-cycle-dependent manner and repressing its transcriptional activity. Component of the ternary complex, cyclin D1/CDK4/CDKN1B, required for nuclear translocation and activity of the cyclin D-CDK4 complex. Exhibits transcriptional corepressor activity with INSM1 on the NEUROD1 and INS promoters in a cell cycle-independent manner. In Rattus norvegicus (Rat), this protein is G1/S-specific cyclin-D1 (Ccnd1).